A 233-amino-acid chain; its full sequence is Protein-L-isoaspartate O-methyltransferase (233 aa).

The active site involves S83.

This sequence belongs to the methyltransferase superfamily. L-isoaspartyl/D-aspartyl protein methyltransferase family.

The protein localises to the cytoplasm. The catalysed reaction is [protein]-L-isoaspartate + S-adenosyl-L-methionine = [protein]-L-isoaspartate alpha-methyl ester + S-adenosyl-L-homocysteine. In terms of biological role, catalyzes the methyl esterification of L-isoaspartyl residues in peptides and proteins that result from spontaneous decomposition of normal L-aspartyl and L-asparaginyl residues. It plays a role in the repair and/or degradation of damaged proteins. The polypeptide is Protein-L-isoaspartate O-methyltransferase (Opitutus terrae (strain DSM 11246 / JCM 15787 / PB90-1)).